The primary structure comprises 261 residues: MAADRGLAVRVIPCLDVDAGRVVKGVNFENLRDAGDPVELAAVYDAEGADELTFLDVTASSSGRSTMLDVVRRTAEQVFIPLTVGGGVRAVADVDALLRAGADKVSVNTAAIARPELLAELARQFGSQCIVLSVDARTVPQGEQPTPSGWEVTTHGGRRGTGIDAVEWATRGAELGVGEILLNSMDFDGTKAGFDLPMLRAVRGAVTVPVIASGGAGAVEHFAPAVHAGADAVLAASVFHFKELTIGQVKAAMAAEGITVR.

Catalysis depends on residues Asp-16 and Asp-135.

The protein belongs to the HisA/HisF family. In terms of assembly, heterodimer of HisH and HisF.

It localises to the cytoplasm. It carries out the reaction 5-[(5-phospho-1-deoxy-D-ribulos-1-ylimino)methylamino]-1-(5-phospho-beta-D-ribosyl)imidazole-4-carboxamide + L-glutamine = D-erythro-1-(imidazol-4-yl)glycerol 3-phosphate + 5-amino-1-(5-phospho-beta-D-ribosyl)imidazole-4-carboxamide + L-glutamate + H(+). Its pathway is amino-acid biosynthesis; L-histidine biosynthesis; L-histidine from 5-phospho-alpha-D-ribose 1-diphosphate: step 5/9. IGPS catalyzes the conversion of PRFAR and glutamine to IGP, AICAR and glutamate. The HisF subunit catalyzes the cyclization activity that produces IGP and AICAR from PRFAR using the ammonia provided by the HisH subunit. This is Imidazole glycerol phosphate synthase subunit HisF from Mycobacterium sp. (strain JLS).